Here is a 916-residue protein sequence, read N- to C-terminus: METSQETSLFLVKILEELDSKQNTVSYQDLCKSLCARFDLSQLAKLRSVLFYTACLDPNFPATLFKDKMKCTVNNQQSKKIMVAADIVTIFNLIQMNGGAAKEKLPTGRQKVRKKEASFESCRSDTEICNAAECEPLNCELSERSFSRGYPIRQSSKCRKMDCKDCPQFVPASEPNFLLGVSKEVKNRAASLDRLQALAPYSVTSPQPCEMQRTYFPMNIENESISDQDSLPINQSIKETFISNEEPFVVQSCVQKRNIFKEDFHNLMAVSPSLVGPISKAENEHREPQSRKEPHKPPFFNHSFEMPYNSQYLNPVYSPVPDKRRAKHESLDDLQASTYFGPTPVMGTQEARRCLGKPNKQTPWPAKSWSLNTEEVPDFERSFFNRNPSEEKLHYPNASSQTPNFPAPERRPTYLVPKDQQPILPIAYAAKQNGLKSKEISSPVDLEKHEPVKKFKDKSINCTSGQLSSDTSSVGTQTEHVLEPKKCRDLCTSGQGKYSDRHTMKHSDDDSEIVSDDISDIFRFLDDMSISGSTGVIQSSCYNSTGSLSQLHKSDCDSSPEHNLTKIANGVPNSKGDKGNRPENTHHSEEELKTSVCKLVLRIGEIERKLESLSGVRDEISQVLGKLNKLDQKMQQPEKVSVQIDLNSLTSEGPSDDSASPRMFHAHSGSHGPKLENNPDWCCSDASGSNSESLRVKALKKSLFTRPSSRSLTEENSATESKIASISNSPRDWRTITYTNRVGLNEEEIKDTGPGDNKDWHRKSKEADRQYDIPPQHRLPKQPKDGFLVEQVFSPHPYPASLKAHMKSNPLYTDMRLTELAEVKRGQPSWTIEEYARNAGDKGKLTALDLQTQESLNPNNLEYWMEDIYTPGYDSLLKRKEAEFRRAKVCKIAALIAAAACTVILVIVVPICTMKS.

At 1–891 (METSQETSLF…AEFRRAKVCK (891 aa)) the chain is on the cytoplasmic side. Disordered stretches follow at residues 390 to 409 (EEKLHYPNASSQTPNFPAPE), 553 to 591 (KSDCDSSPEHNLTKIANGVPNSKGDKGNRPENTHHSEEE), 648 to 675 (SLTSEGPSDDSASPRMFHAHSGSHGPKL), 705 to 726 (TRPSSRSLTEENSATESKIASI), and 745 to 782 (NEEEIKDTGPGDNKDWHRKSKEADRQYDIPPQHRLPKQ). 2 stretches are compositionally biased toward basic and acidic residues: residues 553–564 (KSDCDSSPEHNL) and 575–591 (KGDKGNRPENTHHSEEE). Serine 711 carries the post-translational modification Phosphoserine. The segment covering 750 to 771 (KDTGPGDNKDWHRKSKEADRQY) has biased composition (basic and acidic residues). A helical membrane pass occupies residues 892–912 (IAALIAAAACTVILVIVVPIC). Residues 913–916 (TMKS) lie on the Extracellular side of the membrane.

Belongs to the MINAR family. Interacts with NOTCH2; this interaction increases MINAR1 stability. Interacts (via N-terminus) with DEPTOR (via PDZ domain); this interaction may stabilize DEPTOR protein by impairing its ubiquitination. As to expression, widely expressed, including in breast epithelial cells and endothelial cells (at protein level). Expression is down-regulated in advanced breast tumors (at protein level).

It is found in the cell membrane. Functionally, intrinsically disordered protein which may negatively regulate mTOR signaling pathway by stabilizing the mTOR complex component DEPTOR. Negatively regulates angiogenesis. Negatively regulates cell growth. Negatively regulates neurite outgrowth in hippocampal neurons. The polypeptide is Major intrinsically disordered Notch2-binding receptor 1 (Homo sapiens (Human)).